The primary structure comprises 332 residues: Malate dehydrogenase, cytoplasmic (332 aa).

NAD(+) contacts are provided by residues Gly-11 to Ala-17 and Asp-42. Substrate is bound by residues Arg-92 and Arg-98. NAD(+)-binding positions include Asn-105, Gln-112, and Val-129–Asn-131. 2 residues coordinate substrate: Asn-131 and Arg-162. His-187 serves as the catalytic Proton acceptor.

This sequence belongs to the LDH/MDH superfamily. MDH type 2 family. In terms of assembly, homodimer.

Its subcellular location is the cytoplasm. The catalysed reaction is (S)-malate + NAD(+) = oxaloacetate + NADH + H(+). With respect to regulation, by arsenate for both the forward and reverse reactions. In terms of biological role, malate dehydrogenase. Has no activity with NADPH as substrate. Does not show lactate dehydrogenase activity. In Taenia solium (Pork tapeworm), this protein is Malate dehydrogenase, cytoplasmic.